Consider the following 185-residue polypeptide: MVKLGNNFAEKGTKQPLLEDGFDTIPLMTPLDVNQLQFPPPDKVVVKTKTEYEPDRKKGKARPPKIAEFTVSITEGVTERFKVSVLVLFALAFLTCVVFLVVYKVYKYDRACPDGFVLKNTQCIPEGLESYYTEQDSSAREKFYTVINHYNVAKQSITRSVSPWMSVLSEEKLSEQETEAAEKSA.

At 1–82 (MVKLGNNFAE…ITEGVTERFK (82 aa)) the chain is on the cytoplasmic side. Residues 83–103 (VSVLVLFALAFLTCVVFLVVY) traverse the membrane as a helical; Signal-anchor for type II membrane protein segment. Over 104-185 (KVYKYDRACP…QETEAAEKSA (82 aa)) the chain is Lumenal. The segment at 129–164 (ESYYTEQDSSAREKFYTVINHYNVAKQSITRSVSPW) is required for GRIP1 interaction.

The protein belongs to the NSG family. In terms of assembly, forms a complex with GRIP1, GRIA2 and STX12 through direct interaction with GRIP1; controls the intracellular fate of AMPAR and the endosomal sorting of the GRIA2 subunit toward recycling and membrane targeting. Interacts with STX12. Interacts with APP; could regulate APP processing. Interacts with FAM171A1. In terms of tissue distribution, pituitary and less in adrenal gland and testis. Expressed in the hippocampus throughout development. At P0, highly and broadly expressed throughout the cortical plate, but is down-regulated overall at P8 and P14, but remains relatively enriched in layer V. At P0 is expressed ubiquitously in the developing cerebellum namely Purkinje neurons as well as granule neurons. However, it becomes restricted to Purkinje cells by P8. This exclusive expression in Purkinje cells is maintained throughout adulthood.

The protein resides in the membrane. It localises to the golgi apparatus. The protein localises to the trans-Golgi network membrane. It is found in the endosome membrane. Its subcellular location is the cell projection. The protein resides in the dendrite. It localises to the early endosome membrane. The protein localises to the late endosome membrane. It is found in the lysosome lumen. Its subcellular location is the recycling endosome membrane. The protein resides in the cytoplasmic vesicle membrane. It localises to the golgi stack membrane. The protein localises to the endosome. It is found in the multivesicular body membrane. Its subcellular location is the endoplasmic reticulum membrane. Plays a role in the recycling mechanism in neurons of multiple receptors, including AMPAR, APP and L1CAM and acts at the level of early endosomes to promote sorting of receptors toward a recycling pathway. Regulates sorting and recycling of GRIA2 through interaction with GRIP1 and then contributes to the regulation of synaptic transmission and plasticity by affecting the recycling and targeting of AMPA receptors to the synapse. Is required for faithful sorting of L1CAM to axons by facilitating trafficking from somatodendritic early endosome or the recycling endosome. In an other hand, induces apoptosis via the activation of CASP3 in response to DNA damage. The sequence is that of Neuronal vesicle trafficking-associated protein 1 from Mus musculus (Mouse).